An 882-amino-acid polypeptide reads, in one-letter code: Nitrogen regulatory protein areA (882 aa).

Residues 1-13 (MSGLTLGGGGSGG) show a composition bias toward gly residues. Disordered regions lie at residues 1-75 (MSGL…PDSL), 139-191 (KRKE…LTSD), 228-257 (SRKDQVAESTPVPASFPHPPQDQRKNSEFG), 325-344 (NNHSSSHHNHTSPGMPFGLD), 394-422 (STDFFSPPQSGYQSTASTPQPAYDGEHSM), 461-545 (NQDQ…DMNG), and 579-675 (MDTP…GPTT). Low complexity predominate over residues 48–59 (SDFSQLSDDFSF). 2 stretches are compositionally biased toward polar residues: residues 156 to 169 (NSVSGPSGIAQLTS) and 177 to 191 (PTRQNPSLSTDLTSD). Over residues 325–334 (NNHSSSHHNH) the composition is skewed to basic residues. 2 stretches are compositionally biased toward polar residues: residues 394–413 (STDFFSPPQSGYQSTASTPQ) and 492–503 (QVLNPNDFSTGA). A compositionally biased stretch (basic and acidic residues) spans 604–613 (VRNREQDPRR). Over residues 617–642 (ARTTSTPNTAQLLRQSMNANTSHTSP) the composition is skewed to polar residues. Residues 676-700 (CTNCFTQTTPLWRRNPEGQPLCNAC) form a GATA-type zinc finger. The segment at 723–871 (RNRSSANSLA…NHSIAGGQGA (149 aa)) is disordered. The span at 745–759 (KNSVQQTTVTTPTSS) shows a compositional bias: low complexity. Residues 795 to 811 (NPTTSSPGQSRGTSSVQ) show a composition bias toward polar residues. Residues 848-861 (ALAPAMPPAAANPA) show a composition bias toward low complexity.

Its subcellular location is the nucleus. Major nitrogen regulatory protein. Positively acting regulatory gene of nitrogen metabolite repression. The polypeptide is Nitrogen regulatory protein areA (areA) (Aspergillus niger).